The primary structure comprises 452 residues: Trigger factor (452 aa).

A PPIase FKBP-type domain is found at 171–256 (GDRVTISFKG…ATKVEAPQDT (86 aa)).

This sequence belongs to the FKBP-type PPIase family. Tig subfamily.

The protein resides in the cytoplasm. The catalysed reaction is [protein]-peptidylproline (omega=180) = [protein]-peptidylproline (omega=0). Involved in protein export. Acts as a chaperone by maintaining the newly synthesized protein in an open conformation. Functions as a peptidyl-prolyl cis-trans isomerase. The chain is Trigger factor from Rhodopseudomonas palustris (strain HaA2).